The chain runs to 491 residues: Glutamate--tRNA ligase (491 aa).

The 'HIGH' region motif lies at 13 to 23 (PSPTGFLHIGN). 4 residues coordinate Zn(2+): Cys-110, Cys-112, Cys-137, and His-139. The 'KMSKS' region signature appears at 254–258 (KLSKR). Lys-257 is a binding site for ATP.

It belongs to the class-I aminoacyl-tRNA synthetase family. Glutamate--tRNA ligase type 1 subfamily. As to quaternary structure, monomer. Zn(2+) is required as a cofactor.

It is found in the cytoplasm. It catalyses the reaction tRNA(Glu) + L-glutamate + ATP = L-glutamyl-tRNA(Glu) + AMP + diphosphate. In terms of biological role, catalyzes the attachment of glutamate to tRNA(Glu) in a two-step reaction: glutamate is first activated by ATP to form Glu-AMP and then transferred to the acceptor end of tRNA(Glu). In Listeria monocytogenes serotype 4b (strain F2365), this protein is Glutamate--tRNA ligase.